We begin with the raw amino-acid sequence, 255 residues long: Acetylglutamate kinase (255 aa).

Residues 40–41, Arg62, and Asn153 contribute to the substrate site; that span reads GG.

The protein belongs to the acetylglutamate kinase family. ArgB subfamily.

It localises to the cytoplasm. The enzyme catalyses N-acetyl-L-glutamate + ATP = N-acetyl-L-glutamyl 5-phosphate + ADP. Its pathway is amino-acid biosynthesis; L-arginine biosynthesis; N(2)-acetyl-L-ornithine from L-glutamate: step 2/4. In terms of biological role, catalyzes the ATP-dependent phosphorylation of N-acetyl-L-glutamate. This is Acetylglutamate kinase from Bacillus cereus (strain 03BB102).